The following is a 189-amino-acid chain: Accessory gene regulator protein B (189 aa).

5 consecutive transmembrane segments (helical) span residues Ile-49–Ile-69, Ser-81–Val-100, Ile-110–Lys-130, Tyr-143–Phe-163, and Ala-164–Ile-184.

It belongs to the AgrB family.

The protein resides in the cell membrane. Functionally, essential for the production of a quorum sensing system signal molecule, the autoinducing peptide (AIP). This quorum sensing system is responsible for the regulation of the expression of virulence factor genes. Involved in the proteolytic processing of AgrD, the precursor of AIP. In Staphylococcus aureus (strain COL), this protein is Accessory gene regulator protein B.